Consider the following 59-residue polypeptide: MAVPKKRTSKSKKRIRKSVWREKTKKIASKAFSLAQSILTNRSKSFYYTTNEKISESTE.

A disordered region spans residues 1 to 20; that stretch reads MAVPKKRTSKSKKRIRKSVW.

Belongs to the bacterial ribosomal protein bL32 family.

It localises to the plastid. The protein localises to the chloroplast. This chain is Large ribosomal subunit protein bL32c, found in Angiopteris evecta (Mule's foot fern).